The sequence spans 128 residues: Glycine cleavage system H protein (128 aa).

Residues 24-106 (VYTVGITEHA…YAEGFLFQIK (83 aa)) form the Lipoyl-binding domain. At lysine 65 the chain carries N6-lipoyllysine.

This sequence belongs to the GcvH family. In terms of assembly, the glycine cleavage system is composed of four proteins: P, T, L and H. Requires (R)-lipoate as cofactor.

Its function is as follows. The glycine cleavage system catalyzes the degradation of glycine. The H protein shuttles the methylamine group of glycine from the P protein to the T protein. This is Glycine cleavage system H protein from Serratia proteamaculans (strain 568).